The following is a 93-amino-acid chain: Large ribosomal subunit protein uL23cy (93 aa).

The protein belongs to the universal ribosomal protein uL23 family. Part of the 50S ribosomal subunit.

The protein resides in the plastid. Its subcellular location is the chloroplast. Its function is as follows. Binds to 23S rRNA. The chain is Large ribosomal subunit protein uL23cy (rpl23-B) from Sorghum bicolor (Sorghum).